The chain runs to 94 residues: Integration host factor subunit beta (94 aa).

Belongs to the bacterial histone-like protein family. As to quaternary structure, heterodimer of an alpha and a beta chain.

Functionally, this protein is one of the two subunits of integration host factor, a specific DNA-binding protein that functions in genetic recombination as well as in transcriptional and translational control. This Haemophilus influenzae (strain 86-028NP) protein is Integration host factor subunit beta.